Consider the following 37-residue polypeptide: Large ribosomal subunit protein bL36 (37 aa).

It belongs to the bacterial ribosomal protein bL36 family.

The protein is Large ribosomal subunit protein bL36 of Sulfurimonas denitrificans (strain ATCC 33889 / DSM 1251) (Thiomicrospira denitrificans (strain ATCC 33889 / DSM 1251)).